The sequence spans 313 residues: Formimidoylglutamase (313 aa).

Histidine 130, aspartate 155, histidine 157, aspartate 159, aspartate 241, and aspartate 243 together coordinate Mn(2+).

It belongs to the arginase family. Requires Mn(2+) as cofactor.

It catalyses the reaction N-formimidoyl-L-glutamate + H2O = formamide + L-glutamate. It functions in the pathway amino-acid degradation; L-histidine degradation into L-glutamate; L-glutamate from N-formimidoyl-L-glutamate (hydrolase route): step 1/1. Catalyzes the conversion of N-formimidoyl-L-glutamate to L-glutamate and formamide. This is Formimidoylglutamase from Salmonella schwarzengrund (strain CVM19633).